The following is a 265-amino-acid chain: Mlc titration factor A (265 aa).

H111, H148, H152, and E211 together coordinate Zn(2+).

Belongs to the MtfA family. As to quaternary structure, interacts with Mlc. It depends on Zn(2+) as a cofactor.

The protein localises to the cytoplasm. Involved in the modulation of the activity of the glucose-phosphotransferase system (glucose-PTS). Interacts with the transcriptional repressor Mlc, preventing its interaction with DNA and leading to the modulation of expression of genes regulated by Mlc, including ptsG, which encodes the PTS system glucose-specific EIICB component. Its function is as follows. Shows zinc-dependent metallopeptidase activity. The chain is Mlc titration factor A from Salmonella enteritidis PT4 (strain P125109).